Reading from the N-terminus, the 447-residue chain is Signal recognition particle 54 kDa protein (447 aa).

Residues 105–112, 187–191, and 247–250 contribute to the GTP site; these read GVQGSGKT, DTAGR, and TKMD.

The protein belongs to the GTP-binding SRP family. SRP54 subfamily. Part of the signal recognition particle protein translocation system, which is composed of SRP and FtsY. Archaeal SRP consists of a 7S RNA molecule of 300 nucleotides and two protein subunits: SRP54 and SRP19.

The protein resides in the cytoplasm. It catalyses the reaction GTP + H2O = GDP + phosphate + H(+). Functionally, involved in targeting and insertion of nascent membrane proteins into the cytoplasmic membrane. Binds to the hydrophobic signal sequence of the ribosome-nascent chain (RNC) as it emerges from the ribosomes. The SRP-RNC complex is then targeted to the cytoplasmic membrane where it interacts with the SRP receptor FtsY. In Hyperthermus butylicus (strain DSM 5456 / JCM 9403 / PLM1-5), this protein is Signal recognition particle 54 kDa protein.